A 206-amino-acid chain; its full sequence is Guanylate kinase (206 aa).

Residues 6-184 (GILFILSGPS…AVDKVKTIIK (179 aa)) form the Guanylate kinase-like domain. ATP is bound at residue 13 to 20 (GPSGVGKG).

It belongs to the guanylate kinase family.

The protein resides in the cytoplasm. It carries out the reaction GMP + ATP = GDP + ADP. In terms of biological role, essential for recycling GMP and indirectly, cGMP. In Oceanobacillus iheyensis (strain DSM 14371 / CIP 107618 / JCM 11309 / KCTC 3954 / HTE831), this protein is Guanylate kinase.